The chain runs to 615 residues: Probable transporter mch1 (615 aa).

The interval 1-35 (MTGSIGQAPAIDKRDFDINRRSSTPHETAAQEDEA) is disordered. Over residues 11–20 (IDKRDFDINR) the composition is skewed to basic and acidic residues. A helical membrane pass occupies residues 84 to 104 (FVWGVITCLGAGSITAFSLYG). The N-linked (GlcNAc...) asparagine glycan is linked to asparagine 112. 5 helical membrane-spanning segments follow: residues 120-140 (EVSI…GYLC), 147-167 (PLTL…AFVY), 182-202 (FWVM…MYLA), 218-238 (GIIL…QSQV), and 261-281 (FLFL…ALRI). The N-linked (GlcNAc...) asparagine glycan is linked to asparagine 329. The next 6 membrane-spanning stretches (helical) occupy residues 371 to 391 (IFLA…VTGP), 428 to 448 (IIAL…DLFA), 477 to 497 (LAFL…LASP), 512 to 532 (LVGL…SVVW), 538 to 558 (GTNW…WGVI), and 583 to 603 (FGFW…AWLV).

Belongs to the major facilitator superfamily.

It is found in the vacuole membrane. Its function is as follows. Probable transporter. The polypeptide is Probable transporter mch1 (mch1) (Emericella nidulans (strain FGSC A4 / ATCC 38163 / CBS 112.46 / NRRL 194 / M139) (Aspergillus nidulans)).